The chain runs to 95 residues: Large ribosomal subunit protein uL23 (95 aa).

It belongs to the universal ribosomal protein uL23 family. As to quaternary structure, part of the 50S ribosomal subunit. Contacts protein L29, and trigger factor when it is bound to the ribosome.

Functionally, one of the early assembly proteins it binds 23S rRNA. One of the proteins that surrounds the polypeptide exit tunnel on the outside of the ribosome. Forms the main docking site for trigger factor binding to the ribosome. This Lawsonia intracellularis (strain PHE/MN1-00) protein is Large ribosomal subunit protein uL23.